The chain runs to 86 residues: MATDAQMAQVAELEVEMMSDMYRRMTNACQAKCIATAFKESELTKGEAVCLDRCVAKYLDVHEKLGKRLTSMSQGDEAALQKIAQQ.

Positions 29 to 54 match the Twin CX3C motif motif; sequence CQAKCIATAFKESELTKGEAVCLDRC. Disulfide bonds link cysteine 29–cysteine 54 and cysteine 33–cysteine 50.

It belongs to the small Tim family. As to quaternary structure, heterohexamer; composed of 3 copies of tim-9/tin-9.1 and 3 copies of tim-10/tin-10, named soluble 70 kDa complex. The complex associates with the tim-22 component of the TIM22 complex. Interacts with multi-pass transmembrane proteins in transit.

It localises to the mitochondrion inner membrane. Functionally, mitochondrial intermembrane chaperone that participates in the import and insertion of multi-pass transmembrane proteins into the mitochondrial inner membrane. May also be required for the transfer of beta-barrel precursors from the TOM complex to the sorting and assembly machinery (SAM complex) of the outer membrane. Acts as a chaperone-like protein that protects the hydrophobic precursors from aggregation and guide them through the mitochondrial intermembrane space. The polypeptide is Mitochondrial import inner membrane translocase subunit Tim10 (tin-10) (Caenorhabditis briggsae).